Reading from the N-terminus, the 69-residue chain is ATP synthase F(0) complex subunit 8 (69 aa).

A helical membrane pass occupies residues 8 to 24; the sequence is TWLLTITLMILALFCIY. The residue at position 55 (Lys55) is an N6-acetyllysine; alternate. The residue at position 55 (Lys55) is an N6-succinyllysine; alternate. The residue at position 58 (Lys58) is an N6-acetyllysine.

This sequence belongs to the ATPase protein 8 family. In terms of assembly, component of the ATP synthase complex composed at least of ATP5F1A/subunit alpha, ATP5F1B/subunit beta, ATP5MC1/subunit c (homooctomer), MT-ATP6/subunit a, MT-ATP8/subunit 8, ATP5ME/subunit e, ATP5MF/subunit f, ATP5MG/subunit g, ATP5MK/subunit k, ATP5MJ/subunit j, ATP5F1C/subunit gamma, ATP5F1D/subunit delta, ATP5F1E/subunit epsilon, ATP5PF/subunit F6, ATP5PB/subunit b, ATP5PD/subunit d, ATP5PO/subunit OSCP. ATP synthase complex consists of a soluble F(1) head domain (subunits alpha(3) and beta(3)) - the catalytic core - and a membrane F(0) domain - the membrane proton channel (subunits c, a, 8, e, f, g, k and j). These two domains are linked by a central stalk (subunits gamma, delta, and epsilon) rotating inside the F1 region and a stationary peripheral stalk (subunits F6, b, d, and OSCP). Interacts with PRICKLE3.

The protein localises to the mitochondrion membrane. In terms of biological role, subunit 8, of the mitochondrial membrane ATP synthase complex (F(1)F(0) ATP synthase or Complex V) that produces ATP from ADP in the presence of a proton gradient across the membrane which is generated by electron transport complexes of the respiratory chain. ATP synthase complex consist of a soluble F(1) head domain - the catalytic core - and a membrane F(1) domain - the membrane proton channel. These two domains are linked by a central stalk rotating inside the F(1) region and a stationary peripheral stalk. During catalysis, ATP synthesis in the catalytic domain of F(1) is coupled via a rotary mechanism of the central stalk subunits to proton translocation. In vivo, can only synthesize ATP although its ATP hydrolase activity can be activated artificially in vitro. Part of the complex F(0) domain. The chain is ATP synthase F(0) complex subunit 8 from Osphranter robustus (Wallaroo).